We begin with the raw amino-acid sequence, 615 residues long: Cilia- and flagella-associated protein 52 (615 aa).

WD repeat units lie at residues 54 to 98 (GHSD…LIHR), 101 to 142 (LHKV…AICG), 145 to 184 (CNTNFTNCVKFFNNSPDKLITAGNFNMNVWTYDAGNNKLR), 232 to 275 (GPAK…AGTK), 320 to 359 (AHNDKINGMAFPNEYSEVFATCGTGFIRLWHLTTCRELLR), 362 to 401 (VPNLECFCIAFTTDGSAILSGWSDGKIRAFGPQSGKIIFT), 405 to 444 (AHQKAVTAIASTADSSRILSGGEEGMVRVWRIGRTSQTLE), 449 to 488 (DHKGPVNCIRIKGSGDECVSASSDGSCILWDLHTFKRRTS), 490 to 529 (FANTFFKSVVYHPDESQLVTAGTDRKVTYWDAYDGNAIRI), 533 to 572 (SDLDEVNALAVDRDGEALVSGGGDKLVKLWGYDEGHCYFV), and 575 to 614 (AHSGAITAVGVTPDKQRIVSVGTEGGIFIWDYQRPQTLAD).

This sequence belongs to the CFAP52 family.

Its subcellular location is the cytoplasm. The protein resides in the cell projection. The protein localises to the cilium. It is found in the flagellum. In terms of biological role, may play a role in cell growth and/or survival. The chain is Cilia- and flagella-associated protein 52 from Chlamydomonas reinhardtii (Chlamydomonas smithii).